Reading from the N-terminus, the 111-residue chain is Probable 4-amino-4-deoxy-L-arabinose-phosphoundecaprenol flippase subunit ArnE (111 aa).

3 helical membrane passes run 38–58 (LWLG…LLVL), 61–81 (LPVG…TLAA), and 91–111 (PRHW…GSAA). The 70-residue stretch at 40–109 (LGLALICMGA…IISGIIILGS (70 aa)) folds into the EamA domain.

Belongs to the ArnE family. Heterodimer of ArnE and ArnF.

It localises to the cell inner membrane. It functions in the pathway bacterial outer membrane biogenesis; lipopolysaccharide biosynthesis. Translocates 4-amino-4-deoxy-L-arabinose-phosphoundecaprenol (alpha-L-Ara4N-phosphoundecaprenol) from the cytoplasmic to the periplasmic side of the inner membrane. This chain is Probable 4-amino-4-deoxy-L-arabinose-phosphoundecaprenol flippase subunit ArnE, found in Salmonella agona (strain SL483).